The sequence spans 352 residues: Rhodopsin, deep-sea form (352 aa).

Residues 1 to 36 lie on the Extracellular side of the membrane; the sequence is MNGTEGPNFYIPMSNITGVVRSPFEYPQYYLAEPWA. Asparagine 2 and asparagine 15 each carry an N-linked (GlcNAc...) asparagine glycan. Residues 37–61 traverse the membrane as a helical segment; that stretch reads YTILAAYMFTLILLGFPVNFLTLYV. The Cytoplasmic segment spans residues 62–73; the sequence is TIEHKKLRTPLN. Residues 74-98 traverse the membrane as a helical segment; it reads YILLNLAVANLFMVFGGFTTTVYTS. Residues 99–113 lie on the Extracellular side of the membrane; it reads MHGYFVFGETGCNLE. An intrachain disulfide couples cysteine 110 to cysteine 187. The chain crosses the membrane as a helical span at residues 114–133; it reads GYFATLGGEISLWSLVVLAI. The Cytoplasmic segment spans residues 134–152; that stretch reads ERWVVVCKPMSNFRFGENH. The helical transmembrane segment at 153 to 176 threads the bilayer; that stretch reads AIMGLAFTWIMANSCAMPPLFGWS. Over 177–202 the chain is Extracellular; that stretch reads RYIPEGMQCSCGVDYYTLKPEVNNES. N-linked (GlcNAc...) asparagine glycosylation occurs at asparagine 200. The helical transmembrane segment at 203–230 threads the bilayer; that stretch reads FVIYMFIVHFSVPLTIISFCYGRLVCTV. Residues 231 to 252 lie on the Cytoplasmic side of the membrane; that stretch reads KEAAAQQQESETTQRAEREVTR. A helical membrane pass occupies residues 253–276; the sequence is MVVIMVIAFLVCWVPYASVAWYIF. The Extracellular portion of the chain corresponds to 277–284; it reads THQGSTFG. The helical transmembrane segment at 285 to 309 threads the bilayer; sequence PVFMTVPSFFAKSSAIYNPLIYICL. At lysine 296 the chain carries N6-(retinylidene)lysine. The Cytoplasmic segment spans residues 310–352; that stretch reads NSQFRNCMITTLFCGKNPFQEEEGASTTASKTEASSVSSVSPA. A lipid anchor (S-palmitoyl cysteine) is attached at cysteine 323. Residues 333-352 form a disordered region; it reads GASTTASKTEASSVSSVSPA. Low complexity predominate over residues 334–352; sequence ASTTASKTEASSVSSVSPA.

Belongs to the G-protein coupled receptor 1 family. Opsin subfamily. In terms of processing, phosphorylated on some or all of the serine and threonine residues present in the C-terminal region. As to expression, rod shaped photoreceptor cells which mediates vision in dim light.

It localises to the membrane. Functionally, visual pigments such as rhodopsin and porphyropsin are light-absorbing molecules that mediate vision. Rhodopsin consists of an apoprotein, opsin, covalently linked to 11-cis-retinal. This receptor is coupled to the activation of phospholipase C. Porphyropsin consists of opsin covalently linked to 11-cis 3,4-didehydroretinal. The protein is Rhodopsin, deep-sea form of Anguilla anguilla (European freshwater eel).